Here is a 202-residue protein sequence, read N- to C-terminus: N-(5'-phosphoribosyl)anthranilate isomerase (202 aa).

Belongs to the TrpF family.

It catalyses the reaction N-(5-phospho-beta-D-ribosyl)anthranilate = 1-(2-carboxyphenylamino)-1-deoxy-D-ribulose 5-phosphate. It functions in the pathway amino-acid biosynthesis; L-tryptophan biosynthesis; L-tryptophan from chorismate: step 3/5. The chain is N-(5'-phosphoribosyl)anthranilate isomerase from Listeria monocytogenes serotype 4b (strain CLIP80459).